Here is a 140-residue protein sequence, read N- to C-terminus: Sperm protein associated with the nucleus on the X chromosome N3 (140 aa).

Polar residues-rich tracts occupy residues 1 to 20, 62 to 79, and 131 to 140; these read MEQP…CKSN, INSN…SINP, and EGSSQDSGED. A disordered region spans residues 1-140; that stretch reads MEQPTSSTNG…EGSSQDSGED (140 aa).

Belongs to the SPAN-X family.

The polypeptide is Sperm protein associated with the nucleus on the X chromosome N3 (SPANXN3) (Pan troglodytes (Chimpanzee)).